Here is a 97-residue protein sequence, read N- to C-terminus: Large ribosomal subunit protein eL21 (97 aa).

The tract at residues 1–23 (MTKMSKGPRSGSRRVMTKSVKNK) is disordered.

The protein belongs to the eukaryotic ribosomal protein eL21 family.

In Picrophilus torridus (strain ATCC 700027 / DSM 9790 / JCM 10055 / NBRC 100828 / KAW 2/3), this protein is Large ribosomal subunit protein eL21.